Reading from the N-terminus, the 88-residue chain is Small ribosomal subunit protein bS16c (88 aa).

As to quaternary structure, component of the chloroplast small ribosomal subunit (SSU). Mature 70S chloroplast ribosomes of higher plants consist of a small (30S) and a large (50S) subunit. The 30S small subunit contains 1 molecule of ribosomal RNA (16S rRNA) and 24 different proteins. The 50S large subunit contains 3 rRNA molecules (23S, 5S and 4.5S rRNA) and 33 different proteins.

It localises to the plastid. The protein localises to the chloroplast. Its function is as follows. Component of the chloroplast ribosome (chloro-ribosome), a dedicated translation machinery responsible for the synthesis of chloroplast genome-encoded proteins, including proteins of the transcription and translation machinery and components of the photosynthetic apparatus. In Spinacia oleracea (Spinach), this protein is Small ribosomal subunit protein bS16c.